The chain runs to 631 residues: Probable ATP-dependent RNA helicase DDX53 (631 aa).

The KH domain maps to 48 to 109 (EPPLCFKIKN…EMKAKAKAAI (62 aa)). A Q motif motif is present at residues 222–250 (RFKDAFQQYPDLLKSIIRVGIVKPTPIQS). ATP-binding positions include lysine 244, glutamine 249, 268–273 (TGTGKT), and histidine 311. One can recognise a Helicase ATP-binding domain in the interval 253 to 428 (WPIILQGIDL…LSYLKDPMIV (176 aa)). Residues 376 to 379 (DEAD) carry the DEAD box motif. One can recognise a Helicase C-terminal domain in the interval 440 to 601 (TVKQNIIVTT…SVPEDLVVMA (162 aa)).

It belongs to the DEAD box helicase family. In terms of tissue distribution, expressed in testis. Wide expression in various cancer tissues and cancer cell lines.

It localises to the nucleus. It catalyses the reaction ATP + H2O = ADP + phosphate + H(+). This is Probable ATP-dependent RNA helicase DDX53 (DDX53) from Homo sapiens (Human).